The sequence spans 258 residues: C1q-related factor (258 aa).

The N-terminal stretch at 1–16 (MLLVLVVLIPVLVSSG) is a signal peptide. The segment at 39 to 117 (GPGAGARTDG…PGLPGAGGSG (79 aa)) is disordered. A compositionally biased stretch (low complexity) spans 67 to 77 (GPQGKPGRTGK). The 49-residue stretch at 67 to 115 (GPQGKPGRTGKPGPPGPPGDPGPPGPVGPPGEKGEPGKPGPPGLPGAGG) folds into the Collagen-like domain. Over residues 78 to 95 (PGPPGPPGDPGPPGPVGP) the composition is skewed to pro residues. A C1q domain is found at 125–258 (TTVPRVAFYA…TFSGFIIYSD (134 aa)).

Interacts with ADGRB3. Forms heterooligomers with C1QL4, when proteins are coexpressed; this interaction does not occur after secretion. Expressed in brainstem.

The protein resides in the secreted. Its function is as follows. May regulate the number of excitatory synapses that are formed on hippocampus neurons. Has no effect on inhibitory synapses. This is C1q-related factor (C1QL1) from Homo sapiens (Human).